The following is a 323-amino-acid chain: tRNA U34 carboxymethyltransferase (323 aa).

Residues K91, W105, K110, G130, 181 to 182, M196, Y200, and R315 contribute to the carboxy-S-adenosyl-L-methionine site; that span reads IE.

It belongs to the class I-like SAM-binding methyltransferase superfamily. CmoB family. As to quaternary structure, homotetramer.

The catalysed reaction is carboxy-S-adenosyl-L-methionine + 5-hydroxyuridine(34) in tRNA = 5-carboxymethoxyuridine(34) in tRNA + S-adenosyl-L-homocysteine + H(+). Its function is as follows. Catalyzes carboxymethyl transfer from carboxy-S-adenosyl-L-methionine (Cx-SAM) to 5-hydroxyuridine (ho5U) to form 5-carboxymethoxyuridine (cmo5U) at position 34 in tRNAs. This is tRNA U34 carboxymethyltransferase from Yersinia pseudotuberculosis serotype IB (strain PB1/+).